A 210-amino-acid polypeptide reads, in one-letter code: uncharacterized protein (210 aa).

Transmembrane regions (helical) follow at residues 42-62, 66-86, 126-146, 147-167, and 189-209; these read ITLG…VLFV, ALHG…GFLM, VVVY…EMWQ, IILA…VISL, and AGIV…NEII.

Belongs to the Rht family.

The protein resides in the cell membrane. This is an uncharacterized protein from Haemophilus influenzae (strain ATCC 51907 / DSM 11121 / KW20 / Rd).